Here is a 446-residue protein sequence, read N- to C-terminus: Methanogenesis regulatory protein FilR1 (446 aa).

The region spanning 297 to 416 is the Response regulatory domain; the sequence is DVMIVEDDLG…QRLPEIAEEA (120 aa). Asp-350 is modified (4-aspartylphosphate).

In terms of processing, phosphorylated by FilI.

Its function is as follows. Member of the two-component regulatory system FilI/FilRs, which is involved in the regulation of methanogenesis. Regulates its own expression, expression of the filI-filR2 operon, and of genes involved in methanogenesis such as acs1, acs4 and mtrABC. Acts by binding to the promoters. This is Methanogenesis regulatory protein FilR1 from Methanothrix harundinacea (strain 6Ac) (Methanosaeta harundinacea).